A 71-amino-acid polypeptide reads, in one-letter code: DNA-directed RNA polymerase subunit Rpo10 (71 aa).

Zn(2+) contacts are provided by Cys6, Cys9, Cys52, and Cys53.

This sequence belongs to the archaeal Rpo10/eukaryotic RPB10 RNA polymerase subunit family. Part of the RNA polymerase complex. The cofactor is Zn(2+).

The protein localises to the cytoplasm. The enzyme catalyses RNA(n) + a ribonucleoside 5'-triphosphate = RNA(n+1) + diphosphate. Functionally, DNA-dependent RNA polymerase (RNAP) catalyzes the transcription of DNA into RNA using the four ribonucleoside triphosphates as substrates. The polypeptide is DNA-directed RNA polymerase subunit Rpo10 (Methanocella arvoryzae (strain DSM 22066 / NBRC 105507 / MRE50)).